We begin with the raw amino-acid sequence, 121 residues long: Large ribosomal subunit protein uL24 (121 aa).

It belongs to the universal ribosomal protein uL24 family. As to quaternary structure, part of the 50S ribosomal subunit.

Its function is as follows. One of two assembly initiator proteins, it binds directly to the 5'-end of the 23S rRNA, where it nucleates assembly of the 50S subunit. In terms of biological role, located at the polypeptide exit tunnel on the outside of the subunit. The sequence is that of Large ribosomal subunit protein uL24 from Pyrococcus furiosus (strain ATCC 43587 / DSM 3638 / JCM 8422 / Vc1).